The sequence spans 771 residues: Nitrogen regulation protein NtrY (771 aa).

4 helical membrane-spanning segments follow: residues 22 to 46 (FGLF…ILMG), 56 to 76 (VVIS…AMVG), 99 to 122 (IVGL…SLTL), and 295 to 319 (VAFA…GLNF). The 54-residue stretch at 321 to 374 (KWLVAPIRRLMSAADHVAEGNLDVRVPIYRAEGDLASLAETFNKMTHELRSQRE) folds into the HAMP domain. The region spanning 386-458 (RRRFTEAVLS…HARQRSVQGN (73 aa)) is the PAS domain. Residues 511 to 728 (RIAHEIKNPL…WIRLTLKAEG (218 aa)) form the Histidine kinase domain. H514 bears the Phosphohistidine; by autocatalysis mark. The disordered stretch occupies residues 727–771 (EGPKAEPTDASTKATGAATPAAPAASAMARDAAADSAARGKNERT). Over residues 740–763 (ATGAATPAAPAASAMARDAAADSA) the composition is skewed to low complexity.

It localises to the cell membrane. The enzyme catalyses ATP + protein L-histidine = ADP + protein N-phospho-L-histidine.. Functionally, member of the two-component regulatory system NtrY/NtrX involved in nitrogen level control. Probably activates NtrX by phosphorylation. This Azorhizobium caulinodans (strain ATCC 43989 / DSM 5975 / JCM 20966 / LMG 6465 / NBRC 14845 / NCIMB 13405 / ORS 571) protein is Nitrogen regulation protein NtrY (ntrY).